The chain runs to 39 residues: Photosystem II reaction center protein J (39 aa).

A helical transmembrane segment spans residues 9–29 (LWLVGLVGGLAVITMLGLFIY).

This sequence belongs to the PsbJ family. PSII is composed of 1 copy each of membrane proteins PsbA, PsbB, PsbC, PsbD, PsbE, PsbF, PsbH, PsbI, PsbJ, PsbK, PsbL, PsbM, PsbT, PsbX, PsbY, PsbZ, Psb30/Ycf12, at least 3 peripheral proteins of the oxygen-evolving complex and a large number of cofactors. It forms dimeric complexes.

The protein localises to the plastid. It is found in the chloroplast thylakoid membrane. Its function is as follows. One of the components of the core complex of photosystem II (PSII). PSII is a light-driven water:plastoquinone oxidoreductase that uses light energy to abstract electrons from H(2)O, generating O(2) and a proton gradient subsequently used for ATP formation. It consists of a core antenna complex that captures photons, and an electron transfer chain that converts photonic excitation into a charge separation. The protein is Photosystem II reaction center protein J of Phaeodactylum tricornutum (strain CCAP 1055/1).